The primary structure comprises 62 residues: MAKKAKGNRVQVILECTEHKESGMPGTSRYITTKNRKNTTERLELKKYNPILKRVTVHKEIK.

Belongs to the bacterial ribosomal protein bL33 family.

This chain is Large ribosomal subunit protein bL33, found in Bacteroides thetaiotaomicron (strain ATCC 29148 / DSM 2079 / JCM 5827 / CCUG 10774 / NCTC 10582 / VPI-5482 / E50).